The following is a 278-amino-acid chain: Protein NIF3 homolog (278 aa).

The protein belongs to the GTP cyclohydrolase I type 2/NIF3 family.

The chain is Protein NIF3 homolog from Schizosaccharomyces pombe (strain 972 / ATCC 24843) (Fission yeast).